We begin with the raw amino-acid sequence, 458 residues long: UDP-N-acetylmuramoylalanine--D-glutamate ligase (458 aa).

Position 124 to 130 (124 to 130 (GSDGKTT)) interacts with ATP.

The protein belongs to the MurCDEF family.

The protein localises to the cytoplasm. It carries out the reaction UDP-N-acetyl-alpha-D-muramoyl-L-alanine + D-glutamate + ATP = UDP-N-acetyl-alpha-D-muramoyl-L-alanyl-D-glutamate + ADP + phosphate + H(+). Its pathway is cell wall biogenesis; peptidoglycan biosynthesis. Functionally, cell wall formation. Catalyzes the addition of glutamate to the nucleotide precursor UDP-N-acetylmuramoyl-L-alanine (UMA). The sequence is that of UDP-N-acetylmuramoylalanine--D-glutamate ligase from Clostridium botulinum (strain Kyoto / Type A2).